The sequence spans 160 residues: Transcriptional repressor NrdR (160 aa).

A zinc finger spans residues 3-34 (CPRCHHNNSRVIDSRQADDGRAIRRRRECENC). The ATP-cone domain occupies 49-139 (LLVIKKNGDR…VYRQFKDMSV (91 aa)).

It belongs to the NrdR family. Requires Zn(2+) as cofactor.

In terms of biological role, negatively regulates transcription of bacterial ribonucleotide reductase nrd genes and operons by binding to NrdR-boxes. The chain is Transcriptional repressor NrdR from Enterococcus faecalis (strain ATCC 700802 / V583).